Here is a 395-residue protein sequence, read N- to C-terminus: FAD-dependent urate hydroxylase (395 aa).

FAD-binding positions include G11, 30-31, S43, and M125; that span reads ER. Substrate is bound by residues N180, R206, and 218–220; that span reads YFF. Residues D287 and 297–301 contribute to the FAD site; that span reads GQGGC.

The protein belongs to the FAD-dependent urate hydroxylase family. In terms of assembly, monomer. The cofactor is FAD.

It carries out the reaction urate + NADH + O2 + H(+) = 5-hydroxyisourate + NAD(+) + H2O. The protein operates within purine metabolism; urate degradation. In terms of biological role, catalyzes the hydroxylation of urate to 5-hydroxyisourate (HIU). Is likely to be involved in the urate degradation pathway to allantoin. Prefers NADH over NADPH as the electron donor. This Mycolicibacterium vanbaalenii (strain DSM 7251 / JCM 13017 / BCRC 16820 / KCTC 9966 / NRRL B-24157 / PYR-1) (Mycobacterium vanbaalenii) protein is FAD-dependent urate hydroxylase.